The sequence spans 451 residues: Interferon-related developmental regulator 1 (451 aa).

Basic residues predominate over residues 1 to 10 (MPKNKKRNTP). Residues 1-69 (MPKNKKRNTP…PSSFAEDGPE (69 aa)) are disordered. Residues 23–33 (AAAATAATAGG) show a composition bias toward low complexity. The span at 49–61 (ETMSHCSGYSDPS) shows a compositional bias: polar residues.

It belongs to the IFRD family. As to quaternary structure, interacts with PSIP1/LEDGF. Expressed in a variety of tissues.

Its function is as follows. Could play a role in regulating gene activity in the proliferative and/or differentiative pathways induced by NGF. May be an autocrine factor that attenuates or amplifies the initial ligand-induced signal. This Homo sapiens (Human) protein is Interferon-related developmental regulator 1 (IFRD1).